The primary structure comprises 118 residues: Holin-like protein CidA 2 (118 aa).

Helical transmembrane passes span 4–26 (VTLL…IQGV), 33–52 (GSLI…VLPL), 62–84 (LIVF…GSFL), and 91–113 (IFLL…SQLL).

This sequence belongs to the CidA/LrgA family. CidA subfamily.

It localises to the cell membrane. Functionally, increases the activity of extracellular murein hydrolases possibly by mediating their export via hole formation. Inhibited by the antiholin-like proteins LrgAB. In an unstressed cell, the LrgAB products probably inhibit the function of the CidA protein. When a cell is stressed by the addition of antibiotics or by other factors in the environment, CidA possibly oligomerizes within the bacterial cell membrane, creating lesions that disrupt the proton motive force, which in turn results in loss of cell viability. These lesions are also hypothesized to regulate the subsequent cell lysis by either allowing the murein hydrolases access to the cell wall substrate and/or regulating their activity by a possible change in the cell wall pH that results from loss of membrane potential. The sequence is that of Holin-like protein CidA 2 (cidA2) from Bacillus cereus (strain ATCC 14579 / DSM 31 / CCUG 7414 / JCM 2152 / NBRC 15305 / NCIMB 9373 / NCTC 2599 / NRRL B-3711).